Here is a 406-residue protein sequence, read N- to C-terminus: MTFSVEQVRADFPVLNREVNGQPLVYLDSAASAQKPEAVIGAEAEFYRHGYAAVHRGIHTLSAEATARMEAVRQQAATFLNAGSAEEVVFVRGTTEGINLVANSWGNANVGAGDNIIISEMEHHANIVPWQMLCARVGAELRVIPLNPDGTLQLDVVPGLFDPRTRLLAITEVSNVLGTENPLAALIALAHQHGAKVLVDGAQAVMHHPVDVQALGCDFYVFSAHKLYGPTGIGVLYARSELLQTMAPWEGGGSMIATVSLTEGTTWNQAPWRFEAGTPNTGGIIGLGAALTYVSQLGLTQIAEYEQTLMRYALDALRAVPDLILYGPAQRKGVIAFNLGQHHAYDVGSFLDNYGIAVRTGHHCAMPLMARYQVPAMCRASLAMYNTTEEVDRLVAGLQRIRKLLG.

The residue at position 226 (Lys226) is an N6-(pyridoxal phosphate)lysine. The active-site Cysteine persulfide intermediate is the Cys364.

The protein belongs to the class-V pyridoxal-phosphate-dependent aminotransferase family. Csd subfamily. Homodimer. Interacts with SufE and the SufBCD complex composed of SufB, SufC and SufD. The interaction with SufE is required to mediate the direct transfer of the sulfur atom from the S-sulfanylcysteine. Pyridoxal 5'-phosphate is required as a cofactor.

The protein localises to the cytoplasm. It carries out the reaction (sulfur carrier)-H + L-cysteine = (sulfur carrier)-SH + L-alanine. It catalyses the reaction L-selenocysteine + AH2 = hydrogenselenide + L-alanine + A + H(+). It functions in the pathway cofactor biosynthesis; iron-sulfur cluster biosynthesis. Its function is as follows. Cysteine desulfurases mobilize the sulfur from L-cysteine to yield L-alanine, an essential step in sulfur metabolism for biosynthesis of a variety of sulfur-containing biomolecules. Component of the suf operon, which is activated and required under specific conditions such as oxidative stress and iron limitation. Acts as a potent selenocysteine lyase in vitro, that mobilizes selenium from L-selenocysteine. Selenocysteine lyase activity is however unsure in vivo. This is Cysteine desulfurase from Klebsiella pneumoniae subsp. pneumoniae (strain ATCC 700721 / MGH 78578).